The chain runs to 444 residues: Exodeoxyribonuclease 7 large subunit (444 aa).

The protein belongs to the XseA family. As to quaternary structure, heterooligomer composed of large and small subunits.

It localises to the cytoplasm. It catalyses the reaction Exonucleolytic cleavage in either 5'- to 3'- or 3'- to 5'-direction to yield nucleoside 5'-phosphates.. Bidirectionally degrades single-stranded DNA into large acid-insoluble oligonucleotides, which are then degraded further into small acid-soluble oligonucleotides. The polypeptide is Exodeoxyribonuclease 7 large subunit (Rickettsia akari (strain Hartford)).